We begin with the raw amino-acid sequence, 142 residues long: ATP synthase subunit b' (142 aa).

The helical transmembrane segment at 7–27 (TLPLMMFQFFLLVAVLNAVFF) threads the bilayer.

It belongs to the ATPase B chain family. F-type ATPases have 2 components, F(1) - the catalytic core - and F(0) - the membrane proton channel. F(1) has five subunits: alpha(3), beta(3), gamma(1), delta(1), epsilon(1). F(0) has four main subunits: a(1), b(1), b'(1) and c(10-14). The alpha and beta chains form an alternating ring which encloses part of the gamma chain. F(1) is attached to F(0) by a central stalk formed by the gamma and epsilon chains, while a peripheral stalk is formed by the delta, b and b' chains.

It localises to the cellular thylakoid membrane. Its function is as follows. F(1)F(0) ATP synthase produces ATP from ADP in the presence of a proton or sodium gradient. F-type ATPases consist of two structural domains, F(1) containing the extramembraneous catalytic core and F(0) containing the membrane proton channel, linked together by a central stalk and a peripheral stalk. During catalysis, ATP synthesis in the catalytic domain of F(1) is coupled via a rotary mechanism of the central stalk subunits to proton translocation. In terms of biological role, component of the F(0) channel, it forms part of the peripheral stalk, linking F(1) to F(0). The b'-subunit is a diverged and duplicated form of b found in plants and photosynthetic bacteria. The chain is ATP synthase subunit b' from Acaryochloris marina (strain MBIC 11017).